Consider the following 571-residue polypeptide: Endonuclease/exonuclease/phosphatase family domain-containing protein 1 (571 aa).

Positions M1 to H20 are disordered. A lipid anchor (N-myristoyl glycine) is attached at G2. The span at I11–H20 shows a compositional bias: basic and acidic residues. Phosphoserine occurs at positions 16, 21, and 25. Residues E38–Y67 enclose the HhH domain. Phosphoserine occurs at positions 106, 110, 162, and 175. The disordered stretch occupies residues S202–S227. Residues P204–L213 show a composition bias toward polar residues. Residue T267 is modified to Phosphothreonine. S430 is subject to Phosphoserine. A disordered region spans residues R548–R571. A compositionally biased stretch (basic and acidic residues) spans E561 to R571.

The protein is Endonuclease/exonuclease/phosphatase family domain-containing protein 1 (EEPD1) of Bos taurus (Bovine).